A 473-amino-acid polypeptide reads, in one-letter code: MNKQGNQMSFLRTIILVSTFGGLLFGYDTGVLNGALPYMGEPDQLNLNAFTEGLVTSSLLFGAALGAVFGGRMSDFNGRRKNILFLAVIFFISTIGCTFAPNVTVMIISRFVLGIAVGGASVTVPAYLAEMSPVESRGRMVTQNELMIVSGQLLAFVFNAILGTTMGDNSHVWRFMLVIASLPALFLFFGMIRMPESPRWLVSKGRKEDALRVLKKIRDEKRAAAELQEIEFAFKKEDQLEKATFKDLSVPWVRRIVFIGLGIAIVQQITGVNSIMYYGTEILRNSGFQTEAALIGNIANGVISVLATFVGIWLLGRVGRRPMLMTGLIGTTTALLLIGIFSLVLEGSPALPYVVLSLTVTFLAFQQGAISPVTWLMLSEIFPLRLRGLGMGVTVFCLWMVNFAVSFTFPILLAAIGLSTTFFIFVGLGICSVLFVKRFLPETKGLSLEQLEENFRAYDHSGAKKDSGAEVIG.

The next 12 membrane-spanning stretches (helical) occupy residues 14–34, 49–69, 83–103, 111–131, 146–166, 172–192, 256–276, 295–315, 325–345, 350–370, 389–409, and 411–431; these read IILVSTFGGLLFGYDTGVLNG, AFTEGLVTSSLLFGAALGAVF, ILFLAVIFFISTIGCTFAPNV, FVLGIAVGGASVTVPAYLAEM, LMIVSGQLLAFVFNAILGTTM, VWRFMLVIASLPALFLFFGMI, IVFIGLGIAIVQQITGVNSIM, IGNIANGVISVLATFVGIWLL, MTGLIGTTTALLLIGIFSLVL, ALPYVVLSLTVTFLAFQQGAI, LGMGVTVFCLWMVNFAVSFTF, and ILLAAIGLSTTFFIFVGLGIC.

The protein belongs to the major facilitator superfamily. Sugar transporter (TC 2.A.1.1) family.

The protein resides in the cell membrane. It functions in the pathway polyol metabolism; myo-inositol degradation into acetyl-CoA. In terms of biological role, major myo-inositol uptake transporter. In Bacillus subtilis (strain 168), this protein is Major myo-inositol transporter IolT (iolT).